The chain runs to 248 residues: tRNA1(Val) (adenine(37)-N6)-methyltransferase (248 aa).

It belongs to the methyltransferase superfamily. tRNA (adenine-N(6)-)-methyltransferase family.

The protein localises to the cytoplasm. It catalyses the reaction adenosine(37) in tRNA1(Val) + S-adenosyl-L-methionine = N(6)-methyladenosine(37) in tRNA1(Val) + S-adenosyl-L-homocysteine + H(+). In terms of biological role, specifically methylates the adenine in position 37 of tRNA(1)(Val) (anticodon cmo5UAC). In Musicola paradisiaca (strain Ech703) (Dickeya paradisiaca), this protein is tRNA1(Val) (adenine(37)-N6)-methyltransferase.